The primary structure comprises 214 residues: UPF0725 protein At1g19565 (214 aa).

The interval 56–92 is disordered; the sequence is EEEYEPSLPSSESPTDSCHADHESPDSPKYQQPAPGE.

This sequence belongs to the UPF0725 (EMB2204) family.

The sequence is that of UPF0725 protein At1g19565 from Arabidopsis thaliana (Mouse-ear cress).